The primary structure comprises 419 residues: UDP-N-acetylglucosamine 1-carboxyvinyltransferase (419 aa).

A phosphoenolpyruvate-binding site is contributed by 23-24 (KN). Position 92 (Arg-92) interacts with UDP-N-acetyl-alpha-D-glucosamine. Cys-116 functions as the Proton donor in the catalytic mechanism. 2-(S-cysteinyl)pyruvic acid O-phosphothioketal is present on Cys-116. UDP-N-acetyl-alpha-D-glucosamine-binding positions include 121-125 (RPVDL), 161-164 (KVSV), Asp-306, and Ile-328.

Belongs to the EPSP synthase family. MurA subfamily.

It localises to the cytoplasm. It carries out the reaction phosphoenolpyruvate + UDP-N-acetyl-alpha-D-glucosamine = UDP-N-acetyl-3-O-(1-carboxyvinyl)-alpha-D-glucosamine + phosphate. It participates in cell wall biogenesis; peptidoglycan biosynthesis. Cell wall formation. Adds enolpyruvyl to UDP-N-acetylglucosamine. This Vibrio cholerae serotype O1 (strain ATCC 39541 / Classical Ogawa 395 / O395) protein is UDP-N-acetylglucosamine 1-carboxyvinyltransferase.